The chain runs to 1858 residues: Protein ROS1C (1858 aa).

The span at 347–356 (TEALKGEDAP) shows a compositional bias: basic and acidic residues. 2 disordered regions span residues 347 to 416 (TEAL…AEPF) and 1288 to 1309 (PDTA…KNSE). Composition is skewed to basic residues over residues 360 to 370 (LKTRRRKHRPK) and 394 to 404 (KPKRKYVRKNR). [4Fe-4S] cluster contacts are provided by C1492, C1499, C1502, and C1508.

It belongs to the DNA glycosylase family. DEMETER subfamily. [4Fe-4S] cluster is required as a cofactor. As to expression, expressed in pistils and immature seeds. Expressed a low levels in roots, leaves and anthers.

Its subcellular location is the nucleus. In terms of biological role, bifunctional DNA glycosylase/lyase, which excises 5-methylcytosine (5-meC) and 5-hydroxymethylcytosine (5-hmeC), leaving an apyrimidinic (AP) site that is subsequently incised by the lyase activity. Is responsible for the demethylation of methylated cytosine residues of Tos17 retrotransposon DNA. Demethylation of Tos17 cytosine residues promotes its transposition. May be involved in seed development. The sequence is that of Protein ROS1C from Oryza sativa subsp. japonica (Rice).